The following is a 495-amino-acid chain: UDP-glycosyltransferase 73C12 (495 aa).

Histidine 24 functions as the Proton acceptor in the catalytic mechanism. Residue histidine 24 coordinates an anthocyanidin. Aspartate 129 functions as the Charge relay in the catalytic mechanism. Positions 356, 358, 373, 376, 377, 378, and 381 each coordinate UDP-alpha-D-glucose. Alanine 396 serves as a coordination point for an anthocyanidin. Positions 397 and 398 each coordinate UDP-alpha-D-glucose.

This sequence belongs to the UDP-glycosyltransferase family.

The enzyme catalyses oleanolate + UDP-alpha-D-glucose = oleanolate 3-O-beta-D-glucoside + UDP + H(+). Catalyzes the transfer of a glucose (Glc) moiety from UDP-Glc to the C-3 position of the oleanane sapogenins oleanolate and hederagenin, and to the C-28 carboxylic group of the lupane sapogenin betulinate. The monoglucosylated hederagenin 3-O-beta-D-glucoside is a feeding deterrent of the yellow-striped flea beetle (Phyllotreta nemorum). The sequence is that of UDP-glycosyltransferase 73C12 from Barbarea vulgaris (Yellow rocket).